Consider the following 322-residue polypeptide: Probable transposase for insertion sequence element ISA1214 (322 aa).

It belongs to the transposase 11 family.

Involved in the transposition of the insertion sequence ISA1214. This Archaeoglobus fulgidus (strain ATCC 49558 / DSM 4304 / JCM 9628 / NBRC 100126 / VC-16) protein is Probable transposase for insertion sequence element ISA1214.